The sequence spans 526 residues: Chaperonin GroEL 2 (526 aa).

ATP-binding residues include Lys50, Gly413, and Asp494.

The protein belongs to the chaperonin (HSP60) family. As to quaternary structure, forms a cylinder of 14 subunits composed of two heptameric rings stacked back-to-back. Interacts with the co-chaperonin GroES.

The protein localises to the cytoplasm. It carries out the reaction ATP + H2O + a folded polypeptide = ADP + phosphate + an unfolded polypeptide.. Functionally, together with its co-chaperonin GroES, plays an essential role in assisting protein folding. The GroEL-GroES system forms a nano-cage that allows encapsulation of the non-native substrate proteins and provides a physical environment optimized to promote and accelerate protein folding. The polypeptide is Chaperonin GroEL 2 (Chlamydia pneumoniae (Chlamydophila pneumoniae)).